Consider the following 562-residue polypeptide: Putative transport protein PC1_1686 (562 aa).

6 consecutive transmembrane segments (helical) span residues leucine 8–glycine 28, leucine 32–glutamine 52, phenylalanine 66–phenylalanine 86, phenylalanine 93–phenylalanine 113, tryptophan 116–valine 136, and histidine 158–alanine 178. 2 consecutive RCK C-terminal domains span residues leucine 202–aspartate 288 and valine 292–phenylalanine 373. 5 consecutive transmembrane segments (helical) span residues leucine 383 to phenylalanine 403, phenylalanine 406 to leucine 426, phenylalanine 447 to serine 467, serine 478 to leucine 498, and glycine 537 to tryptophan 557.

It belongs to the AAE transporter (TC 2.A.81) family. YbjL subfamily.

It is found in the cell membrane. The chain is Putative transport protein PC1_1686 from Pectobacterium carotovorum subsp. carotovorum (strain PC1).